The chain runs to 475 residues: 3-hydroxyadipyl-CoA dehydrogenase (475 aa).

The protein belongs to the 3-hydroxyacyl-CoA dehydrogenase family. Homotrimer.

The catalysed reaction is (3S)-3-hydroxyadipyl-CoA + NAD(+) = 3-oxoadipyl-CoA + NADH + H(+). It functions in the pathway aromatic compound metabolism; phenylacetate degradation. Functionally, catalyzes the oxidation of 3-hydroxyadipyl-CoA to yield 3-oxoadipyl-CoA. The protein is 3-hydroxyadipyl-CoA dehydrogenase (paaH) of Escherichia coli (strain K12).